The following is a 788-amino-acid chain: Ribonucleoside-diphosphate reductase subunit alpha (788 aa).

The ATP-cone domain maps to 2–92 (ITVVKRNGRI…LYDLYHKVSG (91 aa)). ATP is bound by residues K6, 12-18 (EPLDITK), and T52. GDP is bound at residue T200. The cysteines at positions 216 and 497 are disulfide-linked. Residues 223–225 (DNI) and R253 each bind dTTP. N424 provides a ligand contact to GDP. N424 functions as the Proton acceptor in the catalytic mechanism. C426 (cysteine radical intermediate) is an active-site residue. Residues E428 and 661 to 663 (SSI) contribute to the GDP site. E428 functions as the Proton acceptor in the catalytic mechanism.

This sequence belongs to the ribonucleoside diphosphate reductase large chain family. As to quaternary structure, tetramer of two alpha and two beta subunits.

The catalysed reaction is a 2'-deoxyribonucleoside 5'-diphosphate + [thioredoxin]-disulfide + H2O = a ribonucleoside 5'-diphosphate + [thioredoxin]-dithiol. Under complex allosteric control mediated by deoxynucleoside triphosphates and ATP binding to separate specificity and activation sites on the alpha subunit. The type of nucleotide bound at the specificity site determines substrate preference. It seems probable that ATP makes the enzyme reduce CDP and UDP, dGTP favors ADP reduction and dTTP favors GDP reduction. Stimulated by ATP and inhibited by dATP binding to the activity site. Provides the precursors necessary for DNA synthesis. Catalyzes the biosynthesis of deoxyribonucleotides from the corresponding ribonucleotides. The polypeptide is Ribonucleoside-diphosphate reductase subunit alpha (nrdA) (Helicobacter pylori (strain ATCC 700392 / 26695) (Campylobacter pylori)).